The following is a 332-amino-acid chain: MFSISHPGDFESLKIIVNEINKLRKINKKLKKESFEVYVGFPEFVGTGRATLYKPNFEDLAKQVNYAKKHNVRFEVVINASCIGGMHLTPKGISYINWIFSQLKNIGVDSVALSDPYLVDLAKNNGLEVNVSCIALVDSLDKALFWDEKEVYAITLDSSINRHFDIIQEIRENVSCKLKILVNEACLYKCPMRIQHFNFFSHANAQNIPALDDYYYNKCINLRIKKKELIIKSPFIRPEDLKYYKGLVDIFKISGRSHPIGWIKRVINAYLNERWDGNLMELLDCPRELEHFYYLDNRALDGAIEYWKSCNKLCSKCNFCKELAEKALKVKY.

It belongs to the peptidase U32 family.

This is an uncharacterized protein from Methanocaldococcus jannaschii (strain ATCC 43067 / DSM 2661 / JAL-1 / JCM 10045 / NBRC 100440) (Methanococcus jannaschii).